The primary structure comprises 502 residues: ATP synthase subunit alpha (502 aa).

ATP is bound at residue 169 to 176; sequence GDRQTGKT.

The protein belongs to the ATPase alpha/beta chains family. In terms of assembly, F-type ATPases have 2 components, CF(1) - the catalytic core - and CF(0) - the membrane proton channel. CF(1) has five subunits: alpha(3), beta(3), gamma(1), delta(1), epsilon(1). CF(0) has three main subunits: a(1), b(2) and c(9-12). The alpha and beta chains form an alternating ring which encloses part of the gamma chain. CF(1) is attached to CF(0) by a central stalk formed by the gamma and epsilon chains, while a peripheral stalk is formed by the delta and b chains.

Its subcellular location is the cell inner membrane. The enzyme catalyses ATP + H2O + 4 H(+)(in) = ADP + phosphate + 5 H(+)(out). In terms of biological role, produces ATP from ADP in the presence of a proton gradient across the membrane. The alpha chain is a regulatory subunit. The sequence is that of ATP synthase subunit alpha from Citrifermentans bemidjiense (strain ATCC BAA-1014 / DSM 16622 / JCM 12645 / Bem) (Geobacter bemidjiensis).